The primary structure comprises 485 residues: Katanin p60 ATPase-containing subunit A1 (485 aa).

Residues 101 to 173 (HRSSPCVVRK…KNKAEAVETE (73 aa)) are disordered. A compositionally biased stretch (basic and acidic residues) spans 141–173 (NGDKGKPQKSKEKKENPSKPKEDKNKAEAVETE). 244-251 (GPPGTGKT) is a binding site for ATP.

This sequence belongs to the AAA ATPase family. Katanin p60 subunit A1 subfamily. Can homooligomerize into hexameric rings, which may be promoted by interaction with microtubules. Interacts with katnb1, which may serve as a targeting subunit.

The protein localises to the cytoplasm. It is found in the cytoskeleton. It localises to the microtubule organizing center. The protein resides in the centrosome. Its subcellular location is the spindle pole. The protein localises to the spindle. The enzyme catalyses n ATP + n H2O + a microtubule = n ADP + n phosphate + (n+1) alpha/beta tubulin heterodimers.. Its activity is regulated as follows. ATPase activity is stimulated by microtubules, which promote homooligomerization. ATP-dependent microtubule severing is stimulated by interaction with katnb1. Its function is as follows. Catalytic subunit of a complex which severs microtubules in an ATP-dependent manner. Microtubule severing may promote rapid reorganization of cellular microtubule arrays and the release of microtubules from the centrosome following nucleation. This Danio rerio (Zebrafish) protein is Katanin p60 ATPase-containing subunit A1 (katna1).